The sequence spans 447 residues: Probable ethanolamine kinase B (447 aa).

A compositionally biased stretch (low complexity) spans 178–208; that stretch reads STTISTSTSTSTSTSSTSPSTSPSLENSTLS. Residues 178 to 217 are disordered; it reads STTISTSTSTSTSTSSTSPSTSPSLENSTLSPRNMNTQTS.

Belongs to the choline/ethanolamine kinase family.

It localises to the cytoplasm. The enzyme catalyses ethanolamine + ATP = phosphoethanolamine + ADP + H(+). Its pathway is phospholipid metabolism; phosphatidylethanolamine biosynthesis; phosphatidylethanolamine from ethanolamine: step 1/3. Highly specific for ethanolamine phosphorylation. May be a rate-controlling step in phosphatidylethanolamine biosynthesis. The chain is Probable ethanolamine kinase B (etnkB) from Dictyostelium discoideum (Social amoeba).